Consider the following 60-residue polypeptide: Cytotoxin 2 (60 aa).

Intrachain disulfides connect cysteine 3–cysteine 21, cysteine 14–cysteine 38, cysteine 42–cysteine 53, and cysteine 54–cysteine 59.

It belongs to the three-finger toxin family. Short-chain subfamily. Type IA cytotoxin sub-subfamily. In terms of assembly, monomer in solution; Homodimer and oligomer in the presence of negatively charged lipids forming a pore with a size ranging between 20 and 30 Angstroms. In terms of tissue distribution, expressed by the venom gland.

It localises to the secreted. Its subcellular location is the target cell membrane. Functionally, this three-finger cytotoxin is a basic protein that interacts and penetrates into the cell membrane, with the tips of all the three loops. Cytotoxins which have a Pro-30 (P-type) interacts with membrane stronger that those which have a 'Ser-28' (S-type). CTII interacts with membrane stronger than CTI. The sequence is that of Cytotoxin 2 from Naja oxiana (Central Asian cobra).